Here is a 392-residue protein sequence, read N- to C-terminus: F-box protein At5g65850 (392 aa).

The F-box domain occupies 29–78 (TEKSVQIPVDIIIEILLRLPAKSIATCRCVSKLWISVICRQDFTELFLTR).

The chain is F-box protein At5g65850 from Arabidopsis thaliana (Mouse-ear cress).